Here is a 260-residue protein sequence, read N- to C-terminus: Ribosomal RNA small subunit methyltransferase A (260 aa).

Residues leucine 23, glycine 48, glutamate 69, aspartate 94, and asparagine 110 each contribute to the S-adenosyl-L-methionine site.

The protein belongs to the class I-like SAM-binding methyltransferase superfamily. rRNA adenine N(6)-methyltransferase family. RsmA subfamily.

The protein localises to the cytoplasm. It carries out the reaction adenosine(1518)/adenosine(1519) in 16S rRNA + 4 S-adenosyl-L-methionine = N(6)-dimethyladenosine(1518)/N(6)-dimethyladenosine(1519) in 16S rRNA + 4 S-adenosyl-L-homocysteine + 4 H(+). In terms of biological role, specifically dimethylates two adjacent adenosines (A1518 and A1519) in the loop of a conserved hairpin near the 3'-end of 16S rRNA in the 30S particle. May play a critical role in biogenesis of 30S subunits. This chain is Ribosomal RNA small subunit methyltransferase A, found in Thermotoga petrophila (strain ATCC BAA-488 / DSM 13995 / JCM 10881 / RKU-1).